Here is a 133-residue protein sequence, read N- to C-terminus: ATP synthase epsilon chain (133 aa).

The protein belongs to the ATPase epsilon chain family. F-type ATPases have 2 components, CF(1) - the catalytic core - and CF(0) - the membrane proton channel. CF(1) has five subunits: alpha(3), beta(3), gamma(1), delta(1), epsilon(1). CF(0) has three main subunits: a, b and c.

It localises to the cell membrane. Produces ATP from ADP in the presence of a proton gradient across the membrane. This chain is ATP synthase epsilon chain, found in Halalkalibacterium halodurans (strain ATCC BAA-125 / DSM 18197 / FERM 7344 / JCM 9153 / C-125) (Bacillus halodurans).